We begin with the raw amino-acid sequence, 476 residues long: Growth arrest-specific protein 7 (476 aa).

The 62-residue stretch at 1–62 (MSGARCRTLY…PASYVQLLEK (62 aa)) folds into the SH3 domain. Positions 77–110 (VILPPGWQSYLSPQGRRYYVNTTTNETTWERPSS) constitute a WW domain. The segment at 100–171 (TNETTWERPS…SSPSKKQSKE (72 aa)) is disordered. A compositionally biased stretch (low complexity) spans 108–120 (PSSSPGIPASPGS). Phosphoserine is present on residues Ser117 and Ser163. A compositionally biased stretch (polar residues) spans 150–171 (RKSTGDSQNLGSSSPSKKQSKE). Residues 196 to 456 (TEWSYCDYFW…LLRKVDPAKD (261 aa)) enclose the F-BAR domain. Positions 309 to 419 (ENFKKDMKKC…RLEVERVEMI (111 aa)) form a coiled coil.

It is found in the cytoplasm. Its function is as follows. May play a role in promoting maturation and morphological differentiation of cerebellar neurons. The polypeptide is Growth arrest-specific protein 7 (GAS7) (Homo sapiens (Human)).